The chain runs to 466 residues: Exodeoxyribonuclease 7 large subunit (466 aa).

Belongs to the XseA family. Heterooligomer composed of large and small subunits.

It localises to the cytoplasm. It catalyses the reaction Exonucleolytic cleavage in either 5'- to 3'- or 3'- to 5'-direction to yield nucleoside 5'-phosphates.. In terms of biological role, bidirectionally degrades single-stranded DNA into large acid-insoluble oligonucleotides, which are then degraded further into small acid-soluble oligonucleotides. In Ruthia magnifica subsp. Calyptogena magnifica, this protein is Exodeoxyribonuclease 7 large subunit.